The primary structure comprises 204 residues: Urease accessory protein UreG (204 aa).

12–19 (GPVGSGKT) lines the GTP pocket.

It belongs to the SIMIBI class G3E GTPase family. UreG subfamily. In terms of assembly, homodimer. UreD, UreF and UreG form a complex that acts as a GTP-hydrolysis-dependent molecular chaperone, activating the urease apoprotein by helping to assemble the nickel containing metallocenter of UreC. The UreE protein probably delivers the nickel.

It is found in the cytoplasm. Functionally, facilitates the functional incorporation of the urease nickel metallocenter. This process requires GTP hydrolysis, probably effectuated by UreG. This Stutzerimonas stutzeri (strain A1501) (Pseudomonas stutzeri) protein is Urease accessory protein UreG.